The following is a 262-amino-acid chain: Ribose-5-phosphate isomerase A (262 aa).

Substrate contacts are provided by residues 33-36 (TGST), 89-92 (DGAD), and 102-105 (KGGG). Residue Glu111 is the Proton acceptor of the active site. Residue Lys129 coordinates substrate.

This sequence belongs to the ribose 5-phosphate isomerase family. Homodimer.

The enzyme catalyses aldehydo-D-ribose 5-phosphate = D-ribulose 5-phosphate. The protein operates within carbohydrate degradation; pentose phosphate pathway; D-ribose 5-phosphate from D-ribulose 5-phosphate (non-oxidative stage): step 1/1. In terms of biological role, catalyzes the reversible conversion of ribose-5-phosphate to ribulose 5-phosphate. The sequence is that of Ribose-5-phosphate isomerase A from Ruegeria pomeroyi (strain ATCC 700808 / DSM 15171 / DSS-3) (Silicibacter pomeroyi).